A 330-amino-acid polypeptide reads, in one-letter code: tRNA N6-adenosine threonylcarbamoyltransferase (330 aa).

Fe cation-binding residues include histidine 110 and histidine 114. Residues 133-137, aspartate 166, glycine 179, and asparagine 268 contribute to the substrate site; that span reads LVSGG. Aspartate 296 contributes to the Fe cation binding site.

This sequence belongs to the KAE1 / TsaD family. The cofactor is Fe(2+).

It localises to the cytoplasm. The enzyme catalyses L-threonylcarbamoyladenylate + adenosine(37) in tRNA = N(6)-L-threonylcarbamoyladenosine(37) in tRNA + AMP + H(+). In terms of biological role, required for the formation of a threonylcarbamoyl group on adenosine at position 37 (t(6)A37) in tRNAs that read codons beginning with adenine. Is involved in the transfer of the threonylcarbamoyl moiety of threonylcarbamoyl-AMP (TC-AMP) to the N6 group of A37, together with TsaE and TsaB. TsaD likely plays a direct catalytic role in this reaction. The sequence is that of tRNA N6-adenosine threonylcarbamoyltransferase from Kosmotoga olearia (strain ATCC BAA-1733 / DSM 21960 / TBF 19.5.1).